A 345-amino-acid chain; its full sequence is MSSSHTIQETKEVHTKTNKRIQWDDLDPKRYYFYNFLLGGSIDLLMFPLDVIRTRLQVQGSQNVIQSFPQYNGTFDGFKKLIRLEGKRALYKGFLTSECGYLCSRAIYFGSYEFVKQGFLKGRSDSDSDLLFVTTISGAISEALASVIWVPFDVATQSVQIQGSLSKPKYKGGSDVFKKIYGERGIKGLYKGFGATIIRNVPYSGIWWGTYEISKSKLTQFNIRQKLGLKERSSHSLAVSAEIDKNNPSHEVENEDPIIHFISGFFAAVFATSITNPLDVAKTRLQTGVFPENEKPNFYTIIKSTIRKEGIRALWKGLVPSLLTSTPYSMISIFLYEEVKKLSLK.

The Mitochondrial intermembrane portion of the chain corresponds to 1–31 (MSSSHTIQETKEVHTKTNKRIQWDDLDPKRY). Solcar repeat units follow at residues 30-118 (RYYF…VKQG), 129-217 (DLLF…SKSK), and 255-342 (EDPI…VKKL). The chain crosses the membrane as a helical span at residues 32-52 (YFYNFLLGGSIDLLMFPLDVI). Over 53 to 88 (RTRLQVQGSQNVIQSFPQYNGTFDGFKKLIRLEGKR) the chain is Mitochondrial matrix. Residues 89-110 (ALYKGFLTSECGYLCSRAIYFG) traverse the membrane as a helical segment. Over 111–129 (SYEFVKQGFLKGRSDSDSD) the chain is Mitochondrial intermembrane. Residues 130 to 150 (LLFVTTISGAISEALASVIWV) form a helical membrane-spanning segment. Residues 151 to 191 (PFDVATQSVQIQGSLSKPKYKGGSDVFKKIYGERGIKGLYK) are Mitochondrial matrix-facing. A helical membrane pass occupies residues 192 to 208 (GFGATIIRNVPYSGIWW). Topologically, residues 209–257 (GTYEISKSKLTQFNIRQKLGLKERSSHSLAVSAEIDKNNPSHEVENEDP) are mitochondrial intermembrane. A helical membrane pass occupies residues 258-278 (IIHFISGFFAAVFATSITNPL). Over 279 to 316 (DVAKTRLQTGVFPENEKPNFYTIIKSTIRKEGIRALWK) the chain is Mitochondrial matrix. A helical membrane pass occupies residues 317 to 337 (GLVPSLLTSTPYSMISIFLYE). Residues 338–345 (EVKKLSLK) lie on the Mitochondrial intermembrane side of the membrane.

Belongs to the mitochondrial carrier (TC 2.A.29) family.

It is found in the mitochondrion inner membrane. Mitochondrial solute carriers shuttle metabolites, nucleotides, and cofactors through the mitochondrial inner membrane. This is Mitochondrial substrate carrier family protein J (mcfJ) from Dictyostelium discoideum (Social amoeba).